The sequence spans 108 residues: Large ribosomal subunit protein uL24 (108 aa).

This sequence belongs to the universal ribosomal protein uL24 family. In terms of assembly, part of the 50S ribosomal subunit.

Functionally, one of two assembly initiator proteins, it binds directly to the 5'-end of the 23S rRNA, where it nucleates assembly of the 50S subunit. In terms of biological role, one of the proteins that surrounds the polypeptide exit tunnel on the outside of the subunit. The protein is Large ribosomal subunit protein uL24 of Mycoplasma capricolum subsp. capricolum (strain California kid / ATCC 27343 / NCTC 10154).